A 151-amino-acid chain; its full sequence is Small ribosomal subunit protein uS15 (151 aa).

The protein belongs to the universal ribosomal protein uS15 family.

The polypeptide is Small ribosomal subunit protein uS15 (RPS13) (Zea mays (Maize)).